A 368-amino-acid polypeptide reads, in one-letter code: Ferrochelatase (368 aa).

Residues His-209 and Glu-290 each contribute to the Fe cation site. Residues 347-368 (REEQEQQAHISREEARRLGADQ) are disordered.

The protein belongs to the ferrochelatase family.

It localises to the cytoplasm. It carries out the reaction heme b + 2 H(+) = protoporphyrin IX + Fe(2+). Its pathway is porphyrin-containing compound metabolism; protoheme biosynthesis; protoheme from protoporphyrin-IX: step 1/1. In terms of biological role, catalyzes the ferrous insertion into protoporphyrin IX. In Janthinobacterium sp. (strain Marseille) (Minibacterium massiliensis), this protein is Ferrochelatase.